A 374-amino-acid polypeptide reads, in one-letter code: MASGFCSLALTVTTSLFSSHAITRRVLPILRWRSSSMSLSPLRHSRALSAATTVPISSSFTWDDVIETGRAEYNSSDLTGFFEKINRCNRGSEKLGEFIPFVIEEQIVGYIHKRFTEYLREFHDIFTFSQNGSCPDRVDGYVTLNLMLQKPEDRTRAVADVIKILGDKGIIPGIRNELYPVKPSFNAPVFFSLERAAAPYFGIKGYGVHMNGYVERDGQKLLWIGKRSLSKSTYPGMLDHLVAGGLPHGISCGGNLVKECEEEAGISRAIADRAIAVGAVSYLDIDQYCFKRDVLFCYDLELPEDFVPKNQDGEVESFKLIPVAQVASVIKKTSFFKANCSLVIIDFLFRHGFIRPESSGYLDLYQRLRNRDCS.

Residues 1–49 (MASGFCSLALTVTTSLFSSHAITRRVLPILRWRSSSMSLSPLRHSRALS) constitute a chloroplast transit peptide. In terms of domain architecture, Nudix hydrolase spans 205–346 (GYGVHMNGYV…KANCSLVIID (142 aa)). A Nudix box motif is present at residues 244-265 (GGLPHGISCGGNLVKECEEEAG). Mg(2+) is bound by residues Glu-259 and Glu-263.

This sequence belongs to the Nudix hydrolase family. Mg(2+) is required as a cofactor. Requires Mn(2+) as cofactor. Expressed in leaves and inflorescences.

Its subcellular location is the plastid. It is found in the chloroplast. Functionally, probably mediates the hydrolysis of some nucleoside diphosphate derivatives. The polypeptide is Nudix hydrolase 20, chloroplastic (NUDT20) (Arabidopsis thaliana (Mouse-ear cress)).